We begin with the raw amino-acid sequence, 95 residues long: MLPVSKQQDDLLLNLYIQPKASRDQIVGVHGEELKIAITAPPVDGKANAHLIKYLSKAFKVPKGDIVILKGQLGRHKQIKILSPRLIPEIINALL.

Belongs to the UPF0235 family.

The protein is UPF0235 protein Ssed_1229 of Shewanella sediminis (strain HAW-EB3).